A 207-amino-acid polypeptide reads, in one-letter code: Superoxide dismutase [Mn] (207 aa).

The Mn(2+) site is built by H28, H76, D160, and H164.

It belongs to the iron/manganese superoxide dismutase family. It depends on Mn(2+) as a cofactor.

The catalysed reaction is 2 superoxide + 2 H(+) = H2O2 + O2. Destroys superoxide anion radicals which are normally produced within the cells and which are toxic to biological systems. The chain is Superoxide dismutase [Mn] (sodA) from Mycobacterium avium.